A 237-amino-acid chain; its full sequence is Ribonuclease PH (237 aa).

Residues arginine 86 and 124–126 (GTR) each bind phosphate.

It belongs to the RNase PH family. In terms of assembly, homohexameric ring arranged as a trimer of dimers.

It catalyses the reaction tRNA(n+1) + phosphate = tRNA(n) + a ribonucleoside 5'-diphosphate. Functionally, phosphorolytic 3'-5' exoribonuclease that plays an important role in tRNA 3'-end maturation. Removes nucleotide residues following the 3'-CCA terminus of tRNAs; can also add nucleotides to the ends of RNA molecules by using nucleoside diphosphates as substrates, but this may not be physiologically important. Probably plays a role in initiation of 16S rRNA degradation (leading to ribosome degradation) during starvation. This Tolumonas auensis (strain DSM 9187 / NBRC 110442 / TA 4) protein is Ribonuclease PH.